The following is a 328-amino-acid chain: Delta-aminolevulinic acid dehydratase (328 aa).

The Zn(2+) site is built by Cys122, Cys124, and Cys132. Lys197 acts as the Schiff-base intermediate with substrate in catalysis. 5-aminolevulinate is bound by residues Arg207 and Arg219. Glu235 provides a ligand contact to Mg(2+). Catalysis depends on Lys250, which acts as the Schiff-base intermediate with substrate. 5-aminolevulinate is bound by residues Ser276 and Tyr315.

It belongs to the ALAD family. As to quaternary structure, homooctamer. The cofactor is Zn(2+).

The catalysed reaction is 2 5-aminolevulinate = porphobilinogen + 2 H2O + H(+). It participates in porphyrin-containing compound metabolism; protoporphyrin-IX biosynthesis; coproporphyrinogen-III from 5-aminolevulinate: step 1/4. Catalyzes an early step in the biosynthesis of tetrapyrroles. Binds two molecules of 5-aminolevulinate per subunit, each at a distinct site, and catalyzes their condensation to form porphobilinogen. The protein is Delta-aminolevulinic acid dehydratase (hemB) of Halalkalibacterium halodurans (strain ATCC BAA-125 / DSM 18197 / FERM 7344 / JCM 9153 / C-125) (Bacillus halodurans).